Reading from the N-terminus, the 700-residue chain is Elongation factor G (700 aa).

Positions 8–290 (DKYRNIGISA…AVVELLPSPL (283 aa)) constitute a tr-type G domain. GTP is bound by residues 17 to 24 (AHIDAGKT), 88 to 92 (DTPGH), and 142 to 145 (NKMD).

It belongs to the TRAFAC class translation factor GTPase superfamily. Classic translation factor GTPase family. EF-G/EF-2 subfamily.

It localises to the cytoplasm. Functionally, catalyzes the GTP-dependent ribosomal translocation step during translation elongation. During this step, the ribosome changes from the pre-translocational (PRE) to the post-translocational (POST) state as the newly formed A-site-bound peptidyl-tRNA and P-site-bound deacylated tRNA move to the P and E sites, respectively. Catalyzes the coordinated movement of the two tRNA molecules, the mRNA and conformational changes in the ribosome. This is Elongation factor G from Polynucleobacter necessarius subsp. necessarius (strain STIR1).